The following is a 187-amino-acid chain: MISLSDFVNRFQLQLPPPPKRLSDNNRHAAVLLPIICKPKPTLLLTRRSATLRSHAGQVAFPGGVADPKDKSIIATALREAEEEVNIPHQKVQVLGQLAPLNSSGGYLVTPIVGLLPPGLSLHSNPAEVAKIFEVPLSEALSLSSYHYLDVSRRGQQHRVYFYWYQQHLIWGLTATIIHQLAQQVQV.

In terms of domain architecture, Nudix hydrolase spans 26-157; that stretch reads NRHAAVLLPI…YLDVSRRGQQ (132 aa). Positions 64 to 86 match the Nudix box motif; the sequence is GVADPKDKSIIATALREAEEEVN. E80 and E84 together coordinate Mg(2+).

This sequence belongs to the Nudix hydrolase family. PCD1 subfamily. Requires Mn(2+) as cofactor. Mg(2+) serves as cofactor.

Its function is as follows. Probably mediates the hydrolysis of some nucleoside diphosphate derivatives. This is an uncharacterized protein from Photorhabdus laumondii subsp. laumondii (strain DSM 15139 / CIP 105565 / TT01) (Photorhabdus luminescens subsp. laumondii).